Reading from the N-terminus, the 2513-residue chain is Polyprotein P1234 (2513 aa).

In terms of domain architecture, Alphavirus-like MT spans 28-259 (EPKQVTPNDH…ESRKLLQSWH (232 aa)). Residues 244-263 (GSTLYPESRKLLQSWHLPSV) are nsP1 membrane-binding. 2 S-palmitoyl cysteine; by host lipidation sites follow: Cys417 and Cys419. In terms of domain architecture, (+)RNA virus helicase ATP-binding spans 690-842 (DLTSPPYHEF…HNICTQVYHK (153 aa)). 721–728 (GVPGSGKS) contacts a ribonucleoside 5'-triphosphate. Residues 843-991 (SISRRCTLPV…IKEWEAEHAS (149 aa)) form the (+)RNA virus helicase C-terminal domain. Residues 1004-1327 (DTFQNKANVC…NQLNAVYAGL (324 aa)) enclose the Peptidase C9 domain. The segment at 1005–1024 (TFQNKANVCWAKCLVPILDT) is nucleolus localization signal. Catalysis depends on Cys1013, which acts as the For cysteine protease nsP2 activity. The short motif at 1058 to 1067 (TRIYGVDLDS) is the Nuclear export signal element. The For cysteine protease nsP2 activity role is filled by His1083. The Nuclear localization signal motif lies at 1182–1186 (PTKRV). Residues Asp1343, Asn1357, Gly1365, Gly1445, Val1446, and Tyr1447 each contribute to the ADP-D-ribose site. Zn(2+) contacts are provided by Cys1595, Cys1597, Cys1620, and Cys1638. 2 consecutive short sequence motifs (FGDF; binding to host G3BP1) follow at residues 1851–1854 (FGDF) and 1869–1872 (FGDF). A RdRp catalytic domain is found at 2267 to 2382 (DAVLETDIAS…HGVVSDALMA (116 aa)).

Interacts with non-structural protein 3. Interacts with RNA-directed RNA polymerase nsP4. Interacts with protease nsP2. interacts with itself. In terms of assembly, interacts with mRNA-capping enzyme nsP1. Interacts with host DDX1. Interacts with host DDX3. Interacts (via C-terminus) with host G3BP1; this interaction inhibits the formation of host stress granules on viral mRNAs and the nsp3-G3BP1 complexes bind viral RNAs and probably orchestrate the assembly of viral replication complexes. Interacts (via C-terminus) with host G3BP2; this interaction inhibits the formation of host stress granules on viral mRNAs and the nsp3-G3BP2 complexes bind viral RNAs and probably orchestrate the assembly of viral replication complexes. As to quaternary structure, interacts with mRNA-capping enzyme nsP1. Interacts with protease nsP2. interacts with itself. Interacts with RNA-directed RNA polymerase nsP4. Interacts with mRNA-capping enzyme nsP1. Interacts with KPNA1/karyopherin-alpha1; this interaction probably allows the active transport of protease nsP2 into the host nucleus. Mg(2+) serves as cofactor. Mn(2+) is required as a cofactor. Post-translationally, specific enzymatic cleavages in vivo yield mature proteins. The processing of the polyprotein is temporally regulated. In early stages (1.7 hpi), P1234 is first cleaved in trans through its nsP2 protease activity, releasing P123 and nsP4, which associate to form the early replication complex. At the same time, P1234 is also cut at the nsP1/nsP2 site early in infection but with lower efficiency. After replication of the viral minus-strand RNAs (4 hpi), the polyproteins are cut at the nsP1/nsP2 and nsP2/nsP3 sites very efficiently, preventing accumulation of P123 and P1234 and allowing the formation of the late replication complex. NsP3/nsP4 site is not cleaved anymore and P34 is produced rather than nsP4. In terms of processing, specific enzymatic cleavages in vivo yield mature proteins. The processing of the polyprotein is temporally regulated. In early stages (1.7 hpi), P123 is cleaved at the nsP1/nsP2 site with low efficiency. After replication of the viral minus-strand RNAs (4 hpi), the polyproteins are cut at the nsP1/nsP2 and nsP2/nsP3 sites very efficiently, preventing accumulation of P123 and allowing the formation of the late replication complex. Palmitoylated by host palmitoyltransferases ZDHHC2 and ZDHHC19. Post-translationally, phosphorylated by host on serines and threonines. In terms of processing, ubiquitinated; targets the protein for rapid degradation via the ubiquitin system. Nsp4 is present in extremely low quantities due to low frequency of translation through the amber stop-codon and the degradation by the ubiquitin pathway.

It is found in the host cytoplasmic vesicle membrane. The protein localises to the host cell membrane. The protein resides in the host cell projection. Its subcellular location is the host filopodium. It localises to the host nucleus. It is found in the host cytoplasm. The catalysed reaction is GTP + S-adenosyl-L-methionine = N(7)-methyl-GTP + S-adenosyl-L-homocysteine. The enzyme catalyses N(7)-methyl-GTP + L-histidyl-[protein] = N(tele)-(N(7)-methylguanosine 5'-phospho)-L-histidyl-[protein] + diphosphate. It carries out the reaction N(tele)-(N(7)-methylguanosine 5'-phospho)-L-histidyl-[protein] + a 5'-end diphospho-(purine-ribonucleoside) in mRNA + H(+) = a 5'-end (N(7)-methyl 5'-triphosphoguanosine)-(purine-ribonucleoside) in mRNA + L-histidyl-[protein]. It catalyses the reaction a 5'-end triphospho-ribonucleoside in mRNA + H2O = a 5'-end diphospho-ribonucleoside in mRNA + phosphate + H(+). The catalysed reaction is a ribonucleoside 5'-triphosphate + H2O = a ribonucleoside 5'-diphosphate + phosphate + H(+). The enzyme catalyses ATP + H2O = ADP + phosphate + H(+). It carries out the reaction RNA(n) + a ribonucleoside 5'-triphosphate = RNA(n+1) + diphosphate. It catalyses the reaction 4-O-(ADP-D-ribosyl)-L-aspartyl-[protein] + H2O = L-aspartyl-[protein] + ADP-D-ribose + H(+). The catalysed reaction is 5-O-(ADP-D-ribosyl)-L-glutamyl-[protein] + H2O = L-glutamyl-[protein] + ADP-D-ribose + H(+). The enzyme catalyses RNA(n) + ATP = RNA(n)-3'-adenine ribonucleotide + diphosphate. It carries out the reaction ADP-alpha-D-ribose 1''-phosphate + H2O = ADP-D-ribose + phosphate. Inactive precursor of the viral replicase, which is activated by cleavages carried out by the viral protease nsP2. Its function is as follows. The early replication complex formed by the polyprotein P123 and nsP4 synthesizes minus-strand RNAs. As soon P123 is cleaved into mature proteins, the plus-strand RNAs synthesis begins. Functionally, cytoplasmic capping enzyme that catalyzes two virus-specific reactions: methyltransferase and nsP1 guanylyltransferase. mRNA-capping is necessary since all viral RNAs are synthesized in the cytoplasm, and host capping enzymes are restricted to the nucleus. The enzymatic reaction involves a covalent link between 7-methyl-GMP and nsP1, whereas eukaryotic capping enzymes form a covalent complex only with GMP. nsP1 capping consists in the following reactions: GTP is first methylated into 7-methyl-GMP and then is covalently linked to nsP1 to form the m7GMp-nsP1 complex from which 7-methyl-GMP complex is transferred to the mRNA to create the cap structure. NsP1 is also needed for the initiation of the minus-strand RNAs synthesis. Probably serves as a membrane anchor for the replication complex composed of nsP1-nsP4. Palmitoylated nsP1 is remodeling host cell cytoskeleton, and induces filopodium-like structure formation at the surface of the host cell. In terms of biological role, multifunctional protein whose N-terminus is part of the RNA polymerase complex and displays NTPase, RNA triphosphatase and helicase activities. NTPase and RNA triphosphatase are involved in viral RNA capping and helicase keeps a check on the dsRNA replication intermediates. The C-terminus harbors a protease that specifically cleaves the polyproteins and releases the mature proteins. Required for the shutoff of minus-strand RNAs synthesis. Specifically inhibits the host IFN response by promoting the nuclear export of host STAT1. Also inhibits host transcription by inducing the rapid proteasome-dependent degradation of POLR2A, a catalytic subunit of the RNAPII complex. The resulting inhibition of cellular protein synthesis serves to ensure maximal viral gene expression and to evade host immune response. Seems to be essential for minus-strand RNAs and subgenomic 26S mRNAs synthesis. Displays mono-ADP-ribosylhydrolase activity. ADP-ribosylation is a post-translational modification that controls various processes of the host cell and the virus probably needs to revert it for optimal viral replication. Binds proteins of G3BP family and sequesters them into the viral RNA replication complexes thereby inhibiting the formation of host stress granules on viral mRNAs. The nsp3-G3BP complexes bind viral RNAs and probably orchestrate the assembly of viral replication complexes, thanks to the ability of G3BP family members to self-assemble and bind DNA. Its function is as follows. RNA dependent RNA polymerase. Replicates genomic and antigenomic RNA by recognizing replications specific signals. The early replication complex formed by the polyprotein P123 and nsP4 synthesizes minus-strand RNAs. The late replication complex composed of fully processed nsP1-nsP4 is responsible for the production of genomic and subgenomic plus-strand RNAs. The polypeptide is Polyprotein P1234 (Anopheles (Human)).